A 322-amino-acid chain; its full sequence is Acetyl-coenzyme A carboxylase carboxyl transferase subunit alpha 2 (322 aa).

Residues 37-294 (EINRLSARSE…KRVLQESLRN (258 aa)) form the CoA carboxyltransferase C-terminal domain.

The protein belongs to the AccA family. Acetyl-CoA carboxylase is a heterohexamer composed of biotin carboxyl carrier protein (AccB), biotin carboxylase (AccC) and two subunits each of ACCase subunit alpha (AccA) and ACCase subunit beta (AccD).

Its subcellular location is the cytoplasm. It catalyses the reaction N(6)-carboxybiotinyl-L-lysyl-[protein] + acetyl-CoA = N(6)-biotinyl-L-lysyl-[protein] + malonyl-CoA. It functions in the pathway lipid metabolism; malonyl-CoA biosynthesis; malonyl-CoA from acetyl-CoA: step 1/1. Its function is as follows. Component of the acetyl coenzyme A carboxylase (ACC) complex. First, biotin carboxylase catalyzes the carboxylation of biotin on its carrier protein (BCCP) and then the CO(2) group is transferred by the carboxyltransferase to acetyl-CoA to form malonyl-CoA. In terms of biological role, confers resistance to the endogenous polyketide antibiotic thailandamide. Can replace the endogenous gene in S.typhimurium, conferring slow growth and resistance to thailandamide. Can also replace the endogenous gene in E.coli, conferring resistance to thailandamide. The sequence is that of Acetyl-coenzyme A carboxylase carboxyl transferase subunit alpha 2 from Burkholderia thailandensis (strain ATCC 700388 / DSM 13276 / CCUG 48851 / CIP 106301 / E264).